The primary structure comprises 343 residues: Probable dual-specificity RNA methyltransferase RlmN (343 aa).

Glu-91 functions as the Proton acceptor in the catalytic mechanism. The region spanning 97–326 (HPDRITACIS…AEIRREKGAD (230 aa)) is the Radical SAM core domain. Cys-104 and Cys-331 are oxidised to a cystine. [4Fe-4S] cluster contacts are provided by Cys-111, Cys-115, and Cys-118. S-adenosyl-L-methionine-binding positions include 158–159 (GE), Ser-190, 213–215 (SLH), and Asn-289. The S-methylcysteine intermediate role is filled by Cys-331.

This sequence belongs to the radical SAM superfamily. RlmN family. It depends on [4Fe-4S] cluster as a cofactor.

The protein localises to the cytoplasm. It catalyses the reaction adenosine(2503) in 23S rRNA + 2 reduced [2Fe-2S]-[ferredoxin] + 2 S-adenosyl-L-methionine = 2-methyladenosine(2503) in 23S rRNA + 5'-deoxyadenosine + L-methionine + 2 oxidized [2Fe-2S]-[ferredoxin] + S-adenosyl-L-homocysteine. The enzyme catalyses adenosine(37) in tRNA + 2 reduced [2Fe-2S]-[ferredoxin] + 2 S-adenosyl-L-methionine = 2-methyladenosine(37) in tRNA + 5'-deoxyadenosine + L-methionine + 2 oxidized [2Fe-2S]-[ferredoxin] + S-adenosyl-L-homocysteine. Functionally, specifically methylates position 2 of adenine 2503 in 23S rRNA and position 2 of adenine 37 in tRNAs. The chain is Probable dual-specificity RNA methyltransferase RlmN from Thermotoga petrophila (strain ATCC BAA-488 / DSM 13995 / JCM 10881 / RKU-1).